A 240-amino-acid chain; its full sequence is Ribonuclease HII (240 aa).

Positions 7–215 (RYAIGIDEAG…LKRIAPGWYV (209 aa)) constitute an RNase H type-2 domain. A divalent metal cation is bound by residues aspartate 13, glutamate 14, and aspartate 112.

Belongs to the RNase HII family. The cofactor is Mn(2+). Mg(2+) is required as a cofactor.

It is found in the cytoplasm. The catalysed reaction is Endonucleolytic cleavage to 5'-phosphomonoester.. In terms of biological role, endonuclease that specifically degrades the RNA of RNA-DNA hybrids. The sequence is that of Ribonuclease HII from Hyperthermus butylicus (strain DSM 5456 / JCM 9403 / PLM1-5).